The following is a 238-amino-acid chain: Ribonuclease PH (238 aa).

Residues R86 and 124-126 (GTR) contribute to the phosphate site.

It belongs to the RNase PH family. As to quaternary structure, homohexameric ring arranged as a trimer of dimers.

It carries out the reaction tRNA(n+1) + phosphate = tRNA(n) + a ribonucleoside 5'-diphosphate. Phosphorolytic 3'-5' exoribonuclease that plays an important role in tRNA 3'-end maturation. Removes nucleotide residues following the 3'-CCA terminus of tRNAs; can also add nucleotides to the ends of RNA molecules by using nucleoside diphosphates as substrates, but this may not be physiologically important. Probably plays a role in initiation of 16S rRNA degradation (leading to ribosome degradation) during starvation. The chain is Ribonuclease PH from Brucella anthropi (strain ATCC 49188 / DSM 6882 / CCUG 24695 / JCM 21032 / LMG 3331 / NBRC 15819 / NCTC 12168 / Alc 37) (Ochrobactrum anthropi).